We begin with the raw amino-acid sequence, 264 residues long: MKQYKDLCRHVLENGEKKGDRTGTGTISTFGYQMRFNLQEGFPMLTTKKLHFKSIAHELLWFLKGDTNVRYLQENGVRIWNEWADENGELGPVYGSQWRSWRGADGETIDQISRLIHDIKTNPNSRRLIVSAWNVGEIDHMALPPCHCLFQFYVADGKLSCQLYQRSADVFLGVPFNIASYALLTMMIAHVTGLEPGEFVHTFGDVHIYQNHVEQVNLQLTRDVRPLPKLRFARNVDSIFDFTFEDFIIEDYDPHPHIKGAVSV.

Arg21 lines the dUMP pocket. His51 provides a ligand contact to (6R)-5,10-methylene-5,6,7,8-tetrahydrofolate. Position 126–127 (126–127 (RR)) interacts with dUMP. The active-site Nucleophile is the Cys146. DUMP contacts are provided by residues 166-169 (RSAD), Asn177, and 207-209 (HIY). Asp169 is a binding site for (6R)-5,10-methylene-5,6,7,8-tetrahydrofolate. Position 263 (Ser263) interacts with (6R)-5,10-methylene-5,6,7,8-tetrahydrofolate.

This sequence belongs to the thymidylate synthase family. Bacterial-type ThyA subfamily. Homodimer.

It localises to the cytoplasm. It catalyses the reaction dUMP + (6R)-5,10-methylene-5,6,7,8-tetrahydrofolate = 7,8-dihydrofolate + dTMP. It functions in the pathway pyrimidine metabolism; dTTP biosynthesis. In terms of biological role, catalyzes the reductive methylation of 2'-deoxyuridine-5'-monophosphate (dUMP) to 2'-deoxythymidine-5'-monophosphate (dTMP) while utilizing 5,10-methylenetetrahydrofolate (mTHF) as the methyl donor and reductant in the reaction, yielding dihydrofolate (DHF) as a by-product. This enzymatic reaction provides an intracellular de novo source of dTMP, an essential precursor for DNA biosynthesis. The polypeptide is Thymidylate synthase (Bacillus velezensis (strain DSM 23117 / BGSC 10A6 / LMG 26770 / FZB42) (Bacillus amyloliquefaciens subsp. plantarum)).